Here is a 1033-residue protein sequence, read N- to C-terminus: Tyrosine-protein kinase-like otk (1033 aa).

The first 22 residues, 1 to 22 (MTARMISIYGLVLASMMASVLA), serve as a signal peptide directing secretion. Residues 23–581 (SSSRFQRLPQ…GGDGFLVTRA (559 aa)) lie on the Extracellular side of the membrane. Ig-like C2-type domains lie at 25-114 (SRFQ…AKLS), 113-199 (LSVI…RVMS), 251-365 (PEDL…VPVS), 368-463 (PGVL…VAIN), and 468-558 (PKFS…VQLI). A glycan (N-linked (GlcNAc...) asparagine) is linked at Asn39. Cystine bridges form between Cys46–Cys95, Cys137–Cys188, Cys276–Cys354, and Cys399–Cys447. Residues Asn336, Asn417, Asn429, Asn444, Asn457, Asn512, and Asn524 are each glycosylated (N-linked (GlcNAc...) asparagine). Cys490 and Cys542 are joined by a disulfide. The helical transmembrane segment at 582 to 602 (VLITMTVALAYIVLVVGLMLW) threads the bilayer. Residues 603-1033 (CRYRRQARKA…LSKAMQSAEK (431 aa)) lie on the Cytoplasmic side of the membrane. 2 disordered regions span residues 617–679 (LSTK…KKSA) and 718–760 (SPSD…KTSM). Over residues 655–673 (KSSGDAQKSDDTACSQQSR) the composition is skewed to polar residues. Ser678 carries the phosphoserine modification. The Protein kinase; inactive domain occupies 692 to 1028 (LSELIQIGRG…QLGAALSKAM (337 aa)). Basic and acidic residues predominate over residues 720–731 (SDKDADTEKQHS).

Belongs to the protein kinase superfamily. Tyr protein kinase family. Insulin receptor subfamily. Interacts with plexA; component of a receptor complex that mediates the repulsive signaling in response to Semaphorin ligands.

Its subcellular location is the cell membrane. In terms of biological role, acts as a calcium-dependent, homophilic cell adhesion molecule that regulates neural recognition during the development of the nervous system. Component of the repulsive Plexin signaling response to regulate motor axon guidance at the embryonic stage. Also component of a receptor complex that is required in the adult visual system to innervate the lamina layer; specific targeting of R1-R6 axons. The sequence is that of Tyrosine-protein kinase-like otk from Drosophila yakuba (Fruit fly).